A 214-amino-acid polypeptide reads, in one-letter code: MRVRYKPWAEDYLKDHPELVDMDGQHAGKMTEWFDKTQPIHIEIGSGMGQFITTLAAQNPHINYISMEREKSIVYKVLDKVKEMSLTNLKIICNDAIELNEYFKDGEVSRIYLNFSDPWPKNRHAKRRLTYHTFLALYQQILNDEGDLHFKTDNRGLFAYSLESMSQFGMYFTKINLNLHQEDDGSNILTEYEKKFSNKGSRIYRMEAKFHSQK.

Residues Glu43, Glu68, Asp95, and Asp117 each coordinate S-adenosyl-L-methionine. Asp117 is a catalytic residue. Residues Lys121, Asp153, and 190–193 (TEYE) contribute to the substrate site.

The protein belongs to the class I-like SAM-binding methyltransferase superfamily. TrmB family.

The catalysed reaction is guanosine(46) in tRNA + S-adenosyl-L-methionine = N(7)-methylguanosine(46) in tRNA + S-adenosyl-L-homocysteine. Its pathway is tRNA modification; N(7)-methylguanine-tRNA biosynthesis. Catalyzes the formation of N(7)-methylguanine at position 46 (m7G46) in tRNA. The chain is tRNA (guanine-N(7)-)-methyltransferase from Staphylococcus aureus (strain MSSA476).